A 66-amino-acid polypeptide reads, in one-letter code: uncharacterized protein (66 aa).

Over residues 1–18 (MSTTSSSSTFSTRTASLS) the composition is skewed to low complexity. The segment at 1–22 (MSTTSSSSTFSTRTASLSQSYT) is disordered.

This is an uncharacterized protein from Schizosaccharomyces pombe (strain 972 / ATCC 24843) (Fission yeast).